A 1294-amino-acid polypeptide reads, in one-letter code: RNA replication protein (1294 aa).

Positions 59–224 (NPFAVKVHSH…SHEFKQLEWL (166 aa)) constitute an Alphavirus-like MT domain. The (+)RNA virus helicase ATP-binding domain maps to 541-698 (LKKQSKDWLA…TYQPFCRYYL (158 aa)). An ATP-binding site is contributed by 570 to 577 (GAGGSGKS). A (+)RNA virus helicase C-terminal domain is found at 699 to 832 (NITHRNKPDL…CVREEKMNEI (134 aa)). Positions 1071-1178 (RTCFSNDFTA…DYVASVKPSF (108 aa)) constitute a RdRp catalytic domain.

It belongs to the potexvirus/carlavirus RNA replication protein family.

It carries out the reaction RNA(n) + a ribonucleoside 5'-triphosphate = RNA(n+1) + diphosphate. It catalyses the reaction ATP + H2O = ADP + phosphate + H(+). RNA replication. The central part of this protein possibly functions as an ATP-binding helicase. This is RNA replication protein from Trifolium (WCMV).